An 80-amino-acid polypeptide reads, in one-letter code: Large ribosomal subunit protein uL24 (80 aa).

This sequence belongs to the universal ribosomal protein uL24 family. Part of the 50S ribosomal subunit.

One of two assembly initiator proteins, it binds directly to the 5'-end of the 23S rRNA, where it nucleates assembly of the 50S subunit. Functionally, one of the proteins that surrounds the polypeptide exit tunnel on the outside of the subunit. This Chlorobaculum tepidum (strain ATCC 49652 / DSM 12025 / NBRC 103806 / TLS) (Chlorobium tepidum) protein is Large ribosomal subunit protein uL24.